The chain runs to 538 residues: Phospho-2-dehydro-3-deoxyheptonate aldolase 1, chloroplastic (538 aa).

The N-terminal 74 residues, 1–74, are a transit peptide targeting the chloroplast; the sequence is MALSSTSTTN…KPSKSSPPAA (74 aa). The disordered stretch occupies residues 55 to 82; sequence DSNKIPIVSDKPSKSSPPAATATTAPAP. Positions 68 to 82 are enriched in low complexity; it reads KSSPPAATATTAPAP. Residue threonine 75 is modified to Blocked amino end (Thr).

Belongs to the class-II DAHP synthase family.

The protein localises to the plastid. It is found in the chloroplast. It carries out the reaction D-erythrose 4-phosphate + phosphoenolpyruvate + H2O = 7-phospho-2-dehydro-3-deoxy-D-arabino-heptonate + phosphate. Its pathway is metabolic intermediate biosynthesis; chorismate biosynthesis; chorismate from D-erythrose 4-phosphate and phosphoenolpyruvate: step 1/7. Its activity is regulated as follows. Activation by tryptophan (a hysteretic factor). This Solanum tuberosum (Potato) protein is Phospho-2-dehydro-3-deoxyheptonate aldolase 1, chloroplastic (SHKA).